Here is a 252-residue protein sequence, read N- to C-terminus: Ditrans,polycis-undecaprenyl-diphosphate synthase ((2E,6E)-farnesyl-diphosphate specific) (252 aa).

The active site involves D24. Mg(2+) is bound at residue D24. Residues 25 to 28 (GNGR), W29, R37, H41, and 69 to 71 (SSE) contribute to the substrate site. N72 functions as the Proton acceptor in the catalytic mechanism. Substrate contacts are provided by W73, R75, and R192. Residue H197 coordinates Mg(2+). 198–200 (RIS) contacts substrate. E211 contacts Mg(2+).

This sequence belongs to the UPP synthase family. Homodimer. Mg(2+) is required as a cofactor.

The enzyme catalyses 8 isopentenyl diphosphate + (2E,6E)-farnesyl diphosphate = di-trans,octa-cis-undecaprenyl diphosphate + 8 diphosphate. Its function is as follows. Catalyzes the sequential condensation of isopentenyl diphosphate (IPP) with (2E,6E)-farnesyl diphosphate (E,E-FPP) to yield (2Z,6Z,10Z,14Z,18Z,22Z,26Z,30Z,34E,38E)-undecaprenyl diphosphate (di-trans,octa-cis-UPP). UPP is the precursor of glycosyl carrier lipid in the biosynthesis of bacterial cell wall polysaccharide components such as peptidoglycan and lipopolysaccharide. The chain is Ditrans,polycis-undecaprenyl-diphosphate synthase ((2E,6E)-farnesyl-diphosphate specific) from Yersinia pestis.